The sequence spans 274 residues: Undecaprenyl-diphosphatase (274 aa).

6 consecutive transmembrane segments (helical) span residues 44-64 (AKVF…LVYW), 85-105 (LNVL…GKAI), 109-129 (LFTP…ILWA), 185-205 (ATDY…VYSL), 215-235 (ADIP…WLCV), and 250-270 (FAWY…SGLV).

Belongs to the UppP family.

It localises to the cell inner membrane. The enzyme catalyses di-trans,octa-cis-undecaprenyl diphosphate + H2O = di-trans,octa-cis-undecaprenyl phosphate + phosphate + H(+). In terms of biological role, catalyzes the dephosphorylation of undecaprenyl diphosphate (UPP). Confers resistance to bacitracin. The protein is Undecaprenyl-diphosphatase of Acidovorax ebreus (strain TPSY) (Diaphorobacter sp. (strain TPSY)).